Reading from the N-terminus, the 1217-residue chain is Disease resistance protein RPS4 (1217 aa).

One can recognise a TIR domain in the interval 14–175; that stretch reads PQHQVFINFR…EIVKAVKTAL (162 aa). Glu-88 is a catalytic residue. The NB-ARC domain maps to 211–472; the sequence is EQRLKDLEEK…FRSQDKDYVE (262 aa). LRR repeat units lie at residues 260–285, 436–459, 614–636, 637–659, 682–706, 708–728, 729–749, 750–774, 796–818, 819–842, and 861–887; these read HALIDQIRVKSKHLELDRLPQMLLGE, PNIVSVFQVSYDELTTAQKDAFLD, LKEVRCLHWLKFPLETLPNDFNP, INLVDLKLPYSEMEQLWEGDKDT, AEKLQRLNLEGCTTLKAFPHDMKKM, MLAFLNLKGCTSLESLPEMNL, ISLKTLTLSGCSTFKEFPLIS, DNIETLYLDGTAISQLPMNMEKLQR, LKALQELILSDCLNLKIFPEIDI, SFLNILLLDGTAIEVMPQLPSVQY, and LSQLKWLDLKYCTSLTSVPEFPPNLQC. Positions 1162–1195 are disordered; that stretch reads TEGVDGRVKKKKKTRMDNGRPKKKQRSGRDDNQT. The short motif at 1170-1177 is the Nuclear localization signal element; it reads KKKKKTRM.

Interacts with EDS1.

It localises to the nucleus. The catalysed reaction is NAD(+) + H2O = ADP-D-ribose + nicotinamide + H(+). Functionally, disease resistance (R) protein that specifically recognizes the AvrRps4 type III effector avirulence protein from Pseudomonas syringae. Resistance proteins guard the plant against pathogens that contain an appropriate avirulence protein via an indirect interaction with this avirulence protein. That triggers a defense system including the hypersensitive response, which restricts the pathogen growth. The combined presence of both regular and alternative RPS4 transcripts with truncated open reading frames (ORFs) is necessary for function. RPS4 function is regulated at multiple levels, including gene expression, alternative splicing, and protein stability. Acts as a disease resistance protein involved in resistance to fungal and bacterial pathogens, including R.solanacearum, P.syringae pv. tomato and C.higginsianum. In presence of RRS1, elicites an EDS1-dependent hypersensitive response. The protein is Disease resistance protein RPS4 of Arabidopsis thaliana (Mouse-ear cress).